Here is a 357-residue protein sequence, read N- to C-terminus: UDP-N-acetylglucosamine--N-acetylmuramyl-(pentapeptide) pyrophosphoryl-undecaprenol N-acetylglucosamine transferase (357 aa).

UDP-N-acetyl-alpha-D-glucosamine contacts are provided by residues Thr12–Gly14, Asn124, Arg163, Ser191, Ile245, Ala264–Glu269, and Gln290.

It belongs to the glycosyltransferase 28 family. MurG subfamily.

The protein localises to the cell inner membrane. The catalysed reaction is di-trans,octa-cis-undecaprenyl diphospho-N-acetyl-alpha-D-muramoyl-L-alanyl-D-glutamyl-meso-2,6-diaminopimeloyl-D-alanyl-D-alanine + UDP-N-acetyl-alpha-D-glucosamine = di-trans,octa-cis-undecaprenyl diphospho-[N-acetyl-alpha-D-glucosaminyl-(1-&gt;4)]-N-acetyl-alpha-D-muramoyl-L-alanyl-D-glutamyl-meso-2,6-diaminopimeloyl-D-alanyl-D-alanine + UDP + H(+). The protein operates within cell wall biogenesis; peptidoglycan biosynthesis. Functionally, cell wall formation. Catalyzes the transfer of a GlcNAc subunit on undecaprenyl-pyrophosphoryl-MurNAc-pentapeptide (lipid intermediate I) to form undecaprenyl-pyrophosphoryl-MurNAc-(pentapeptide)GlcNAc (lipid intermediate II). This Nitrosospira multiformis (strain ATCC 25196 / NCIMB 11849 / C 71) protein is UDP-N-acetylglucosamine--N-acetylmuramyl-(pentapeptide) pyrophosphoryl-undecaprenol N-acetylglucosamine transferase.